The primary structure comprises 37 residues: uncharacterized protein (37 aa).

This is an uncharacterized protein from Archaeoglobus fulgidus (strain ATCC 49558 / DSM 4304 / JCM 9628 / NBRC 100126 / VC-16).